The chain runs to 676 residues: Probable potassium transport system protein Kup (676 aa).

A run of 12 helical transmembrane segments spans residues 14 to 34 (GLLI…LYVM), 56 to 76 (ISLI…IIAL), 97 to 117 (AAWL…DGTL), 142 to 162 (VSNQ…LFSI), 173 to 193 (AFGP…LINI), 219 to 239 (AGFA…ALYS), 252 to 272 (SWPF…VWIL), 296 to 316 (LASI…LITG), 345 to 365 (IYIP…VLFF), 376 to 396 (GLSI…WLVL), 402 to 422 (LANL…MGSS), and 429 to 449 (GGYV…VWYF).

Belongs to the HAK/KUP transporter (TC 2.A.72) family.

The protein localises to the cell membrane. It catalyses the reaction K(+)(in) + H(+)(in) = K(+)(out) + H(+)(out). Functionally, transport of potassium into the cell. Likely operates as a K(+):H(+) symporter. The protein is Probable potassium transport system protein Kup of Lactobacillus delbrueckii subsp. bulgaricus (strain ATCC BAA-365 / Lb-18).